A 427-amino-acid chain; its full sequence is UPF0229 protein YeaH (427 aa).

The segment covering 79 to 90 (NDHFVQNDRIER) has biased composition (basic and acidic residues). A disordered region spans residues 79–110 (NDHFVQNDRIERPQGGGGGSGSGQGQASQDGE). The span at 92 to 102 (QGGGGGSGSGQ) shows a compositional bias: gly residues.

The protein belongs to the UPF0229 family.

The chain is UPF0229 protein YeaH from Escherichia coli O127:H6 (strain E2348/69 / EPEC).